We begin with the raw amino-acid sequence, 537 residues long: Carbamoyl phosphate synthase large chain, C-terminal section (537 aa).

A carbamoyl phosphate synthetic domain region spans residues 1–395 (MSKKVVILGS…AYYKAQLSAG (395 aa)). The 192-residue stretch at 122–313 (RELIIELGLK…LAKIATKVAI (192 aa)) folds into the ATP-grasp domain. Residues Arg158, Lys197, Leu199, Glu204, Gly229, Val230, His231, Ser232, Gln272, and Glu284 each contribute to the ATP site. Mg(2+) contacts are provided by Gln272, Glu284, and Asn286. Residues Gln272, Glu284, and Asn286 each contribute to the Mn(2+) site. In terms of domain architecture, MGS-like spans 396–537 (YRLPEKGNLF…VHSLQEIYNI (142 aa)). The segment at 396-537 (YRLPEKGNLF…VHSLQEIYNI (142 aa)) is allosteric domain.

This sequence belongs to the CarB family. Composed of two chains; the small (or glutamine) chain promotes the hydrolysis of glutamine to ammonia, which is used by the large (or ammonia) chain to synthesize carbamoyl phosphate. Tetramer of heterodimers (alpha,beta)4. Mg(2+) serves as cofactor. Requires Mn(2+) as cofactor.

It carries out the reaction hydrogencarbonate + L-glutamine + 2 ATP + H2O = carbamoyl phosphate + L-glutamate + 2 ADP + phosphate + 2 H(+). The catalysed reaction is hydrogencarbonate + NH4(+) + 2 ATP = carbamoyl phosphate + 2 ADP + phosphate + 2 H(+). It functions in the pathway amino-acid biosynthesis; L-arginine biosynthesis; carbamoyl phosphate from bicarbonate: step 1/1. Its pathway is pyrimidine metabolism; UMP biosynthesis via de novo pathway; (S)-dihydroorotate from bicarbonate: step 1/3. Functionally, large subunit of the glutamine-dependent carbamoyl phosphate synthetase (CPSase). CPSase catalyzes the formation of carbamoyl phosphate from the ammonia moiety of glutamine, carbonate, and phosphate donated by ATP, constituting the first step of 2 biosynthetic pathways, one leading to arginine and/or urea and the other to pyrimidine nucleotides. The large subunit (synthetase) binds the substrates ammonia (free or transferred from glutamine from the small subunit), hydrogencarbonate and ATP and carries out an ATP-coupled ligase reaction, activating hydrogencarbonate by forming carboxy phosphate which reacts with ammonia to form carbamoyl phosphate. This Aquifex aeolicus (strain VF5) protein is Carbamoyl phosphate synthase large chain, C-terminal section (carB2).